A 223-amino-acid chain; its full sequence is Ribose-5-phosphate isomerase A (223 aa).

Residues 32-35 (TGST), 85-88 (DGAD), and 98-101 (KGGG) contribute to the substrate site. The active-site Proton acceptor is the glutamate 107. Residue lysine 125 participates in substrate binding.

It belongs to the ribose 5-phosphate isomerase family. As to quaternary structure, homodimer.

It catalyses the reaction aldehydo-D-ribose 5-phosphate = D-ribulose 5-phosphate. It functions in the pathway carbohydrate degradation; pentose phosphate pathway; D-ribose 5-phosphate from D-ribulose 5-phosphate (non-oxidative stage): step 1/1. In terms of biological role, catalyzes the reversible conversion of ribose-5-phosphate to ribulose 5-phosphate. In Pseudomonas syringae pv. tomato (strain ATCC BAA-871 / DC3000), this protein is Ribose-5-phosphate isomerase A.